The sequence spans 204 residues: Glycerol-3-phosphate acyltransferase (204 aa).

Helical transmembrane passes span 8–28, 53–73, 81–101, 116–136, and 155–175; these read ILIF…CYIF, VPAA…VVIA, FITA…IFFG, FGFS…VAII, and VIFT…IIIL.

This sequence belongs to the PlsY family. In terms of assembly, probably interacts with PlsX.

It is found in the cell inner membrane. It catalyses the reaction an acyl phosphate + sn-glycerol 3-phosphate = a 1-acyl-sn-glycero-3-phosphate + phosphate. It functions in the pathway lipid metabolism; phospholipid metabolism. Catalyzes the transfer of an acyl group from acyl-phosphate (acyl-PO(4)) to glycerol-3-phosphate (G3P) to form lysophosphatidic acid (LPA). This enzyme utilizes acyl-phosphate as fatty acyl donor, but not acyl-CoA or acyl-ACP. The sequence is that of Glycerol-3-phosphate acyltransferase from Francisella tularensis subsp. mediasiatica (strain FSC147).